The primary structure comprises 225 residues: Glutathione S-transferase U2 (225 aa).

Positions 6-85 constitute a GST N-terminal domain; the sequence is ESVKLLGFWI…YIDQTWNNNP (80 aa). Glutathione contacts are provided by residues 16–17, 42–43, 56–57, and 69–70; these read SP, KK, KV, and ES. The region spanning 90 to 217 is the GST C-terminal domain; that stretch reads DPYEKAMVRF…EKHIERMKKI (128 aa). Thr151 bears the Phosphothreonine mark.

It belongs to the GST superfamily. Tau family.

Its subcellular location is the cytoplasm. The protein resides in the cytosol. It carries out the reaction RX + glutathione = an S-substituted glutathione + a halide anion + H(+). Functionally, may be involved in the conjugation of reduced glutathione to a wide number of exogenous and endogenous hydrophobic electrophiles and have a detoxification role against certain herbicides. This chain is Glutathione S-transferase U2 (GSTU2), found in Arabidopsis thaliana (Mouse-ear cress).